The chain runs to 300 residues: uncharacterized protein (300 aa).

This is an uncharacterized protein from Ictalurid herpesvirus 1 (strain Auburn) (IcHV-1).